The following is a 122-amino-acid chain: Large ribosomal subunit protein bL12 (122 aa).

It belongs to the bacterial ribosomal protein bL12 family. As to quaternary structure, homodimer. Part of the ribosomal stalk of the 50S ribosomal subunit. Forms a multimeric L10(L12)X complex, where L10 forms an elongated spine to which 2 to 4 L12 dimers bind in a sequential fashion. Binds GTP-bound translation factors.

In terms of biological role, forms part of the ribosomal stalk which helps the ribosome interact with GTP-bound translation factors. Is thus essential for accurate translation. In Xylella fastidiosa (strain M12), this protein is Large ribosomal subunit protein bL12.